The primary structure comprises 201 residues: Protein TraJ (201 aa).

The protein resides in the cytoplasm. This protein is essential for positively regulating the expression of transfer genes that are involved in the conjugal transfer of DNA between bacterial cells. This is Protein TraJ (traJ) from Escherichia coli.